The sequence spans 605 residues: Exo-beta-1,3-glucanase (605 aa).

The interval 1-23 (MHVPPTDPARSAPPASPHRRRRP) is disordered. Residues 1–44 (MHVPPTDPARSAPPASPHRRRRPKALGLTALAAAMLMAVPTTQA) form the signal peptide. Substrate is bound by residues glutamine 174, 194–196 (YGW), glutamine 217, 446–449 (WRAD), and 480–481 (EH). Glutamate 502 functions as the Proton donor in the catalytic mechanism. Tyrosine 505 contacts substrate.

Belongs to the glycosyl hydrolase 55 family.

The protein localises to the secreted. The catalysed reaction is Successive hydrolysis of beta-D-glucose units from the non-reducing ends of (1-&gt;3)-beta-D-glucans, releasing alpha-glucose.. Exo-beta-1,3-glucanase that specifically hydrolyzes laminarin and laminarioligosaccharides, producing glucose and laminaribiose as end products. This Streptomyces sp. (strain SirexAA-E / ActE) protein is Exo-beta-1,3-glucanase.